The sequence spans 202 residues: Transcription factor IBH1 (202 aa).

Pro residues predominate over residues 1-16 (MDAKRTPPPPTPPNPN). The disordered stretch occupies residues 1–33 (MDAKRTPPPPTPPNPNPSVIGSGAAADGGGFGR). The region spanning 136-185 (TSAAARAVPPPPRQQGEPPRAEALRRLVPGGAGMEYSSLLEETADYLRSL) is the bHLH domain.

This sequence belongs to the bHLH protein family. As to quaternary structure, interacts with ILI1. Binds to ILI5/BUL1 and BC1. Interacts with BCL1 and BCL2. As to expression, highly expressed in roots and at lower levels in leaf blades, leaf sheaths, lamina joint, stems and panicles.

Atypical and probable non DNA-binding bHLH transcription factor that acts as a negative regulator of cell elongation and plant development. Binds the transcription factor ILI1 and forms a heterodimer of antagonistic bHLH transcription factors that function downstream of BZR1 to mediate brassinosteroid regulation of cell elongation and lamina inclination. In Oryza sativa subsp. japonica (Rice), this protein is Transcription factor IBH1.